The following is a 337-amino-acid chain: Zinc finger protein 488 (337 aa).

Residues 1–10 (MAAGTSTLLS) are compositionally biased toward polar residues. 3 disordered regions span residues 1–32 (MAAGTSTLLSLSGPADHMAEGKGAPLRPSVEK), 55–83 (SDTAAGKGSQDEAYTELSLPTAPNKPRLD), and 146–179 (SAWPGAPRSEQKSAFSKPAKRPAEKPKRSPMLLA). An important for transcriptional repression activity region spans residues 69 to 184 (TELSLPTAPN…PMLLAGGSAE (116 aa)). 2 C2H2-type zinc fingers span residues 272 to 299 (NWCAKCNLAFRLTADLVFHMRSHHKREH) and 314 to 336 (LTCPVCHEYFRERHHLSRHMASH). The Nuclear localization signal signature appears at 295 to 302 (HKREHVGP).

Belongs to the krueppel C2H2-type zinc-finger protein family. As to quaternary structure, interacts with OLIG2.

The protein resides in the nucleus. In terms of biological role, transcriptional repressor. Plays a role in oligodendrocyte differentiation, together with OLIG2. Mediates Notch signaling-activated formation of oligodendrocyte precursors. Promotes differentiation of adult neural stem progenitor cells (NSPCs) into mature oligodendrocytes and contributes to remyelination following nerve injury. The sequence is that of Zinc finger protein 488 (Znf488) from Mus musculus (Mouse).